Consider the following 249-residue polypeptide: Orotidine 5'-phosphate decarboxylase (249 aa).

Substrate is bound by residues Asp18, Lys40, Asp67–Thr76, Thr127, Arg188, Gln197, Gly217, and Arg218. Residue Lys69 is the Proton donor of the active site.

The protein belongs to the OMP decarboxylase family. Type 1 subfamily. In terms of assembly, homodimer.

The enzyme catalyses orotidine 5'-phosphate + H(+) = UMP + CO2. Its pathway is pyrimidine metabolism; UMP biosynthesis via de novo pathway; UMP from orotate: step 2/2. Its function is as follows. Catalyzes the decarboxylation of orotidine 5'-monophosphate (OMP) to uridine 5'-monophosphate (UMP). This Baumannia cicadellinicola subsp. Homalodisca coagulata protein is Orotidine 5'-phosphate decarboxylase.